A 515-amino-acid polypeptide reads, in one-letter code: 3,4-dehydroadipyl-CoA semialdehyde dehydrogenase (515 aa).

Residues E255 and C294 contribute to the active site. The segment at 470-515 (VMPTCLHGGPRARRRRRGVGRSARAGDVSPPLRRAGRPRGAGSPVA) is disordered. Residues 479 to 488 (PRARRRRRGV) are compositionally biased toward basic residues. Low complexity predominate over residues 489–515 (GRSARAGDVSPPLRRAGRPRGAGSPVA).

It belongs to the aldehyde dehydrogenase family. As to quaternary structure, homodimer.

It carries out the reaction (3Z)-6-oxohex-3-enoyl-CoA + NADP(+) + H2O = cis-3,4-dehydroadipyl-CoA + NADPH + 2 H(+). In terms of biological role, catalyzes the NADP-dependent oxidation of 3,4-dehydroadipyl-CoA semialdehyde to form cis-3,4-dehydroadipyl-CoA. The sequence is that of 3,4-dehydroadipyl-CoA semialdehyde dehydrogenase (boxD) from Aromatoleum evansii (Azoarcus evansii).